The following is a 124-amino-acid chain: NADH dehydrogenase [ubiquinone] 1 alpha subcomplex subunit 6 (124 aa).

The protein belongs to the complex I LYR family.

The protein localises to the mitochondrion inner membrane. Its function is as follows. Accessory subunit of the mitochondrial membrane respiratory chain NADH dehydrogenase (Complex I), that is believed to be not involved in catalysis. Complex I functions in the transfer of electrons from NADH to the respiratory chain. The immediate electron acceptor for the enzyme is believed to be ubiquinone. The sequence is that of NADH dehydrogenase [ubiquinone] 1 alpha subcomplex subunit 6 (ndufa6) from Dictyostelium discoideum (Social amoeba).